We begin with the raw amino-acid sequence, 591 residues long: Protein NRT1/ PTR FAMILY 4.3 (591 aa).

The segment covering 1 to 10 has biased composition (polar residues); that stretch reads MAEINKQSNK. Residues 1–38 form a disordered region; it reads MAEINKQSNKWEQEEVSNENNWELAEEESVDWRGRPSN. Helical transmembrane passes span 47-67, 85-105, 109-129, 157-177, 204-224, 233-253, 347-367, 395-415, 429-449, 463-483, 502-522, and 551-571; these read AALF…AVGN, ANIV…GGYL, FLGS…GFIL, GFKA…SGCV, FNAA…LLVW, IGFG…VSGT, LISL…LAQL, AIPY…LVPF, LTRI…AAML, ILSI…EMFT, FLMA…SVLV, and LFYW…LFWS.

Belongs to the major facilitator superfamily. Proton-dependent oligopeptide transporter (POT/PTR) (TC 2.A.17) family. As to expression, expressed in flowers. Detected in roots and siliques.

Its subcellular location is the membrane. The chain is Protein NRT1/ PTR FAMILY 4.3 (NPF4.3) from Arabidopsis thaliana (Mouse-ear cress).